Reading from the N-terminus, the 325-residue chain is Casein kinase I isoform alpha (325 aa).

Ala-2 is subject to N-acetylalanine. Ser-4 carries the phosphoserine modification. Residue Lys-8 is modified to N6-acetyllysine. Residues 17–285 (YKLVRKIGSG…YLRQLFRILF (269 aa)) form the Protein kinase domain. ATP is bound by residues 23 to 31 (IGSGSFGDI) and Lys-46. Asp-136 serves as the catalytic Proton acceptor.

This sequence belongs to the protein kinase superfamily. CK1 Ser/Thr protein kinase family. Casein kinase I subfamily. In terms of assembly, interacts with the Axin complex. Interacts with TUT1, leading to TUT1 phosphorylation. Interacts with FAM83A, FAM83B, FAM83C, FAM83D, FAM83E, FAM83F, FAM83G and FAM83H (via DUF1669). Interaction with FAM83H recruits CSNK1A1 to keratin filaments. In terms of processing, phosphorylated by MTOR in response to mitogenic stimulation, leading to its activation.

The protein localises to the cytoplasm. The protein resides in the cytoskeleton. It localises to the microtubule organizing center. It is found in the centrosome. Its subcellular location is the chromosome. The protein localises to the centromere. The protein resides in the kinetochore. It localises to the nucleus speckle. It is found in the cilium basal body. Its subcellular location is the spindle. It catalyses the reaction L-seryl-[protein] + ATP = O-phospho-L-seryl-[protein] + ADP + H(+). The catalysed reaction is L-threonyl-[protein] + ATP = O-phospho-L-threonyl-[protein] + ADP + H(+). In terms of biological role, casein kinases are operationally defined by their preferential utilization of acidic proteins such as caseins as substrates. Can phosphorylate a large number of proteins. Participates in Wnt signaling. Phosphorylates CTNNB1 at 'Ser-45'. May phosphorylate PER1 and PER2. May play a role in segregating chromosomes during mitosis. May play a role in keratin cytoskeleton disassembly and thereby, it may regulate epithelial cell migration. Acts as a positive regulator of mTORC1 and mTORC2 signaling in response to nutrients by mediating phosphorylation of DEPTOR inhibitor. Acts as an inhibitor of NLRP3 inflammasome assembly by mediating phosphorylation of NLRP3. This Oryctolagus cuniculus (Rabbit) protein is Casein kinase I isoform alpha (CSNK1A1).